Reading from the N-terminus, the 732-residue chain is Eukaryotic translation initiation factor 3 subunit B (732 aa).

The tract at residues 1–94 is sufficient for interaction with HCR1 and TIF32; the sequence is MTTLESLKIE…LFIEMESVSA (94 aa). Residues 1–219 form a sufficient for interaction with PIC8 region; it reads MTTLESLKIE…GVTSWGGPNF (219 aa). The region spanning 37–120 is the RRM domain; the sequence is NFLVVDGAPV…HRLLVNSLND (84 aa). WD repeat units follow at residues 185–224, 237–280, 439–481, and 507–554; these read ARKNWSNDVVKFSPKGTYLLSFHDQGVTSWGGPNFDRLKR, PTEK…LMKT, EMKD…KFFA, and VDQQ…KTLN.

Belongs to the eIF-3 subunit B family. In terms of assembly, component of the eukaryotic translation initiation factor 3 (eIF-3) complex.

It localises to the cytoplasm. Functionally, RNA-binding component of the eukaryotic translation initiation factor 3 (eIF-3) complex, which is involved in protein synthesis of a specialized repertoire of mRNAs and, together with other initiation factors, stimulates binding of mRNA and methionyl-tRNAi to the 40S ribosome. The eIF-3 complex specifically targets and initiates translation of a subset of mRNAs involved in cell proliferation. In Kluyveromyces lactis (strain ATCC 8585 / CBS 2359 / DSM 70799 / NBRC 1267 / NRRL Y-1140 / WM37) (Yeast), this protein is Eukaryotic translation initiation factor 3 subunit B.